The primary structure comprises 326 residues: UDP-3-O-acylglucosamine N-acyltransferase (326 aa).

The active-site Proton acceptor is the His-235.

Belongs to the transferase hexapeptide repeat family. LpxD subfamily. In terms of assembly, homotrimer.

The catalysed reaction is a UDP-3-O-[(3R)-3-hydroxyacyl]-alpha-D-glucosamine + a (3R)-hydroxyacyl-[ACP] = a UDP-2-N,3-O-bis[(3R)-3-hydroxyacyl]-alpha-D-glucosamine + holo-[ACP] + H(+). Its pathway is bacterial outer membrane biogenesis; LPS lipid A biosynthesis. Its function is as follows. Catalyzes the N-acylation of UDP-3-O-acylglucosamine using 3-hydroxyacyl-ACP as the acyl donor. Is involved in the biosynthesis of lipid A, a phosphorylated glycolipid that anchors the lipopolysaccharide to the outer membrane of the cell. The chain is UDP-3-O-acylglucosamine N-acyltransferase from Helicobacter hepaticus (strain ATCC 51449 / 3B1).